Consider the following 140-residue polypeptide: 6,7-dimethyl-8-ribityllumazine synthase (140 aa).

5-amino-6-(D-ribitylamino)uracil is bound by residues Phe-11, 42–44, and 66–68; these read ALE and VVI. 71-72 is a binding site for (2S)-2-hydroxy-3-oxobutyl phosphate; that stretch reads ET. His-74 functions as the Proton donor in the catalytic mechanism. Asn-98 lines the 5-amino-6-(D-ribitylamino)uracil pocket. Position 112 (Arg-112) interacts with (2S)-2-hydroxy-3-oxobutyl phosphate.

This sequence belongs to the DMRL synthase family.

It carries out the reaction (2S)-2-hydroxy-3-oxobutyl phosphate + 5-amino-6-(D-ribitylamino)uracil = 6,7-dimethyl-8-(1-D-ribityl)lumazine + phosphate + 2 H2O + H(+). Its pathway is cofactor biosynthesis; riboflavin biosynthesis; riboflavin from 2-hydroxy-3-oxobutyl phosphate and 5-amino-6-(D-ribitylamino)uracil: step 1/2. Catalyzes the formation of 6,7-dimethyl-8-ribityllumazine by condensation of 5-amino-6-(D-ribitylamino)uracil with 3,4-dihydroxy-2-butanone 4-phosphate. This is the penultimate step in the biosynthesis of riboflavin. This Erythrobacter litoralis (strain HTCC2594) protein is 6,7-dimethyl-8-ribityllumazine synthase.